The chain runs to 225 residues: MVVINGVKYACETCIRGHRAAQCTHTDGPLQMIRRKGRPSTTCGHCKELRRTKNFNPSGGCMCASARRPAVGSKEDETRCRCDEGEPCKCHTKRKSSRKSKGGSCHRRANDEAAHVNGLGIADLDVLLGLNGRSSDVDMTTTLPSLKPPLQNGEIKADSIDNLDLASLDPLEQSPSISMEPVSINETGSAYTTTNTALNDIDIPFSINELNELYKQVSSHNSHSQ.

The copper-fist DNA-binding region spans 1–40; sequence MVVINGVKYACETCIRGHRAAQCTHTDGPLQMIRRKGRPS. The interval 1–108 is binds copper and DNA; sequence MVVINGVKYA…KSKGGSCHRR (108 aa). Residues C11, C14, C23, and H25 each coordinate Zn(2+). The required for transcriptional activation stretch occupies residues 109 to 225; sequence ANDEAAHVNG…QVSSHNSHSQ (117 aa).

The protein resides in the nucleus. Its function is as follows. Trans-acting regulatory protein that activates transcription of the CUP1 gene (metallothionein) in response to copper ions. Binds to the CUP1 UAS sequence 5'-GCTTCTTTTCCGCTGA-3'. Binds DNA only in presence of copper or silver. Copper seems to alter the conformation of the protein. The chain is Transcriptional activator protein CUP2 (CUP2) from Saccharomyces cerevisiae (strain ATCC 204508 / S288c) (Baker's yeast).